The following is a 534-amino-acid chain: Probable alpha-galactosidase A (534 aa).

The first 25 residues, 1–25 (MRLITRWIPLANALASTMPVQVVAS), serve as a signal peptide directing secretion. Cys47 and Cys79 are joined by a disulfide. Residues Asn50, Asn88, Asn94, and Asn124 are each glycosylated (N-linked (GlcNAc...) asparagine). Cys127 and Cys157 form a disulfide bridge. Asp155 functions as the Nucleophile in the catalytic mechanism. Asn204 carries N-linked (GlcNAc...) asparagine glycosylation. The Proton donor role is filled by Asp213. Residues 413-534 (CSQVIPTGLI…GLPAGVHVAL (122 aa)) form the Ricin B-type lectin domain. Cys430 and Cys443 are oxidised to a cystine. An N-linked (GlcNAc...) asparagine glycan is attached at Asn444. An intrachain disulfide couples Cys468 to Cys481.

The protein belongs to the glycosyl hydrolase 27 family.

Its subcellular location is the secreted. It catalyses the reaction Hydrolysis of terminal, non-reducing alpha-D-galactose residues in alpha-D-galactosides, including galactose oligosaccharides, galactomannans and galactolipids.. In terms of biological role, hydrolyzes a variety of simple alpha-D-galactoside as well as more complex molecules such as oligosaccharides and polysaccharides. The protein is Probable alpha-galactosidase A (aglA) of Aspergillus flavus (strain ATCC 200026 / FGSC A1120 / IAM 13836 / NRRL 3357 / JCM 12722 / SRRC 167).